We begin with the raw amino-acid sequence, 389 residues long: tRNA N(3)-cytidine methyltransferase METTL2 (389 aa).

Residues Met1–Phe20 form a disordered region. Trp78, Tyr82, Gly181, Asp206, Asp232, Leu233, and Ile253 together coordinate S-adenosyl-L-methionine.

It belongs to the methyltransferase superfamily. METL family. Monomer. Interacts with DALRD3.

The protein resides in the cytoplasm. It catalyses the reaction cytidine(32) in tRNA(Thr) + S-adenosyl-L-methionine = N(3)-methylcytidine(32) in tRNA(Thr) + S-adenosyl-L-homocysteine + H(+). The enzyme catalyses cytidine(32) in tRNA(Arg)(CCU) + S-adenosyl-L-methionine = N(3)-methylcytidine(32) in tRNA(Arg)(CCU) + S-adenosyl-L-homocysteine + H(+). S-adenosyl-L-methionine-dependent methyltransferase that mediates N(3)-methylcytidine modification of residue 32 of the tRNA anticodon loop of tRNA(Thr)(UGU) and tRNA(Arg)(CCU). N(3)-methylcytidine methylation by METTL2 requires the N6-threonylcarbamoylation of tRNA (t6A37) by the EKC/KEOPS complex as prerequisite. The polypeptide is tRNA N(3)-cytidine methyltransferase METTL2 (Mus musculus (Mouse)).